Here is a 332-residue protein sequence, read N- to C-terminus: Ferredoxin--NADP reductase (332 aa).

Positions 20, 39, 47, 52, 92, 126, 288, and 329 each coordinate FAD.

The protein belongs to the ferredoxin--NADP reductase type 2 family. As to quaternary structure, homodimer. FAD serves as cofactor.

It carries out the reaction 2 reduced [2Fe-2S]-[ferredoxin] + NADP(+) + H(+) = 2 oxidized [2Fe-2S]-[ferredoxin] + NADPH. This is Ferredoxin--NADP reductase from Geobacillus thermodenitrificans (strain NG80-2).